Reading from the N-terminus, the 99-residue chain is Aspartyl/glutamyl-tRNA(Asn/Gln) amidotransferase subunit C (99 aa).

Belongs to the GatC family. As to quaternary structure, heterotrimer of A, B and C subunits.

The catalysed reaction is L-glutamyl-tRNA(Gln) + L-glutamine + ATP + H2O = L-glutaminyl-tRNA(Gln) + L-glutamate + ADP + phosphate + H(+). It catalyses the reaction L-aspartyl-tRNA(Asn) + L-glutamine + ATP + H2O = L-asparaginyl-tRNA(Asn) + L-glutamate + ADP + phosphate + 2 H(+). Functionally, allows the formation of correctly charged Asn-tRNA(Asn) or Gln-tRNA(Gln) through the transamidation of misacylated Asp-tRNA(Asn) or Glu-tRNA(Gln) in organisms which lack either or both of asparaginyl-tRNA or glutaminyl-tRNA synthetases. The reaction takes place in the presence of glutamine and ATP through an activated phospho-Asp-tRNA(Asn) or phospho-Glu-tRNA(Gln). In Burkholderia mallei (strain NCTC 10247), this protein is Aspartyl/glutamyl-tRNA(Asn/Gln) amidotransferase subunit C.